Consider the following 292-residue polypeptide: ATP-dependent Clp protease proteolytic subunit 4, chloroplastic (292 aa).

The N-terminal 65 residues, 1–65 (MGTLSLSSSL…LRFANASIEM (65 aa)), are a transit peptide targeting the chloroplast. Ser-66 carries the post-translational modification N-acetylserine. The active-site Nucleophile is Ser-158. The active site involves His-183.

It belongs to the peptidase S14 family. Component of the chloroplastic Clp protease core complex which consist of at least 16 proteins: CLPP4 (3 copies), CLPP5 (3 copies), CLPR4 (2 copies), ClpP1 (1 copy), CLPP6 (1 copy), CLPR2 (1 copy), CLPT1 (1 copy), CLPT2 (1 copy) and 3 copies of CLPP3 and/or CLPR1 and/or CLPR3. Interacts with CHIP. The core complex is organized in two heptameric rings, one containing CLPP3,4,5,6 in a 1:2:3:1 ratio and the other CLPP1 and CLPR1,2,3,4 in a 3:1:1:1:1 ratio. Ubiquitinated by CHIP. In terms of tissue distribution, mostly expressed in leaves. Also detected in stems, and to a lower extent, in roots (at protein level).

The protein resides in the plastid. The protein localises to the chloroplast stroma. The enzyme catalyses Hydrolysis of proteins to small peptides in the presence of ATP and magnesium. alpha-casein is the usual test substrate. In the absence of ATP, only oligopeptides shorter than five residues are hydrolyzed (such as succinyl-Leu-Tyr-|-NHMec, and Leu-Tyr-Leu-|-Tyr-Trp, in which cleavage of the -Tyr-|-Leu- and -Tyr-|-Trp bonds also occurs).. In terms of biological role, cleaves peptides in various proteins in a process that requires ATP hydrolysis. Has a chymotrypsin-like activity. Plays a major role in the degradation of misfolded proteins. Essential protein required for chloroplast development and integrity. Essential for Embryogenesis. This Arabidopsis thaliana (Mouse-ear cress) protein is ATP-dependent Clp protease proteolytic subunit 4, chloroplastic.